The primary structure comprises 441 residues: GTPase Der (441 aa).

EngA-type G domains are found at residues 4–169 and 178–353; these read PIVA…PEGS and PKVA…DAQT. GTP is bound by residues 10–17, 57–61, 120–123, 184–191, 231–235, and 296–299; these read GRPNVGKS, DTGGI, NKVD, GKPNVGKS, DTAGL, and NKWD. The KH-like domain occupies 354 to 438; the sequence is MRIPTGVLNE…SIRFINRERK (85 aa).

The protein belongs to the TRAFAC class TrmE-Era-EngA-EngB-Septin-like GTPase superfamily. EngA (Der) GTPase family. In terms of assembly, associates with the 50S ribosomal subunit.

In terms of biological role, GTPase that plays an essential role in the late steps of ribosome biogenesis. This Lachnospira eligens (strain ATCC 27750 / DSM 3376 / VPI C15-48 / C15-B4) (Eubacterium eligens) protein is GTPase Der.